A 452-amino-acid chain; its full sequence is Lamina-associated polypeptide 2, isoforms beta/delta/epsilon/gamma (452 aa).

The nucleoplasmic stretch occupies residues 1-409; that stretch reads MPEFLEDPSV…KSEKTKKRRS (409 aa). An LEM-like domain is found at 5 to 48; the sequence is LEDPSVLTKDKLKSELVANNVTLPAGEQRKDVYVQLYLQHLTAR. Disordered stretches follow at residues 48–111 and 149–263; these read RNRP…DLDV and REQG…RVET. The segment at 49–108 is linker; sequence NRPPLAAGANSKGPPDFSSDEEREPTPVLGSGASVGRGRGAVGRKATKKTDKPRLEDKDD. 3 positions are modified to phosphoserine: Ser-59, Ser-66, and Ser-67. At Thr-74 the chain carries Phosphothreonine. Phosphoserine is present on residues Ser-79 and Ser-82. Residues Arg-85 and Arg-87 each carry the omega-N-methylarginine modification. Residues 96–105 are compositionally biased toward basic and acidic residues; the sequence is KKTDKPRLED. Residues 109–153 form the LEM domain; it reads LDVTELSNEELLDQLVRYGVNPGPIVGTTRKLYEKKLLKLREQGT. The segment at 137 to 242 is NAKAP95-binding N; sequence TRKLYEKKLL…TSGSSTGGPL (106 aa). Position 153 is a phosphothreonine (Thr-153). The segment covering 154-177 has biased composition (polar residues); that stretch reads ESRSSTPLPTVSSSAENTRQNGSN. A phosphoserine mark is found at Ser-155 and Ser-158. Phosphothreonine is present on residues Thr-159 and Thr-163. Phosphoserine is present on residues Ser-165, Ser-167, and Ser-176. Residues 178–202 are compositionally biased toward basic and acidic residues; the sequence is DSDRYSDNDEDSKIELKLEKREPLK. Position 179 is a phosphoserine; by PKC (Ser-179). Ser-183 and Ser-189 each carry phosphoserine. Lys-206 bears the N6-acetyllysine mark. Thr-210 is subject to Phosphothreonine. 2 positions are modified to phosphoserine: Ser-221 and Ser-223. A compositionally biased stretch (low complexity) spans 226–240; the sequence is GVTETEWTSGSSTGG. Ser-249, Ser-253, Ser-264, Ser-291, Ser-305, and Ser-306 each carry phosphoserine. Positions 298–370 are binds lamins B; that stretch reads TGNFKHASSI…SCRRPIKGAA (73 aa). The interval 299–373 is NAKAP95-binding C; that stretch reads GNFKHASSIL…RPIKGAAGRP (75 aa). Thr-311 bears the Phosphothreonine mark. Ser-314 carries the phosphoserine modification. Arg-319 carries the post-translational modification Citrulline. Phosphoserine is present on residues Ser-361, Ser-377, and Ser-384. Lys-388 is modified (N6-acetyllysine). Residue Lys-400 forms a Glycyl lysine isopeptide (Lys-Gly) (interchain with G-Cter in SUMO2) linkage. Ser-401 carries the phosphoserine modification. A helical; Signal-anchor for type II membrane protein membrane pass occupies residues 410–430; the sequence is VPMWIKMLLFALVAVFLFLVY. Residues 431-452 are Lumenal-facing; the sequence is QAMETNQGNPFTNFLQDTKISN.

Belongs to the LEM family. As to quaternary structure, interacts with LMNB1, LMNB2, BANF1, AKAP8L, GMCL and chromosomes. Mitosis-specific phosphorylation specifically abolishes its binding to lamin B and chromosomes. Post-translationally, citrullinated by PADI4.

Its subcellular location is the nucleus inner membrane. The protein localises to the chromosome. Its function is as follows. May help direct the assembly of the nuclear lamina and thereby help maintain the structural organization of the nuclear envelope. Possible receptor for attachment of lamin filaments to the inner nuclear membrane. May be involved in the control of initiation of DNA replication through its interaction with NAKAP95. The sequence is that of Lamina-associated polypeptide 2, isoforms beta/delta/epsilon/gamma (Tmpo) from Mus musculus (Mouse).